The sequence spans 317 residues: Beta-ketoacyl-[acyl-carrier-protein] synthase III (317 aa).

Residues Cys-112 and His-244 contribute to the active site. An ACP-binding region spans residues 245–249 (QANIR). Residue Asn-274 is part of the active site.

Belongs to the thiolase-like superfamily. FabH family. In terms of assembly, homodimer.

Its subcellular location is the cytoplasm. It carries out the reaction malonyl-[ACP] + acetyl-CoA + H(+) = 3-oxobutanoyl-[ACP] + CO2 + CoA. The protein operates within lipid metabolism; fatty acid biosynthesis. Functionally, catalyzes the condensation reaction of fatty acid synthesis by the addition to an acyl acceptor of two carbons from malonyl-ACP. Catalyzes the first condensation reaction which initiates fatty acid synthesis and may therefore play a role in governing the total rate of fatty acid production. Possesses both acetoacetyl-ACP synthase and acetyl transacylase activities. Its substrate specificity determines the biosynthesis of branched-chain and/or straight-chain of fatty acids. This Rickettsia akari (strain Hartford) protein is Beta-ketoacyl-[acyl-carrier-protein] synthase III.